A 586-amino-acid polypeptide reads, in one-letter code: Clathrin heavy chain linker domain-containing protein 1 (586 aa).

Positions 174-232 (MNLDALTKYMKHLEDKYAEIKQAMLIKYVPAQRKADLDEEMIVLLKRRDVAENLNKKLQ) form a coiled coil.

The sequence is that of Clathrin heavy chain linker domain-containing protein 1 (CLHC1) from Homo sapiens (Human).